A 237-amino-acid chain; its full sequence is Immunoglobulin superfamily member 6 (237 aa).

The N-terminal stretch at 1–27 is a signal peptide; sequence MGPVSARRSRLRPEISLILFQVGMVGA. Residues 28–152 are Extracellular-facing; the sequence is CTVYVLQPGY…ERLFSKEVRS (125 aa). Positions 30 to 134 constitute an Ig-like C2-type domain; that stretch reads VYVLQPGYLE…ELSPSAKHVG (105 aa). A disulfide bridge connects residues cysteine 51 and cysteine 118. Residues 153-173 form a helical membrane-spanning segment; sequence FLIVLLALLSVYITGVCVTFI. The Cytoplasmic segment spans residues 174–237; the sequence is VLFKSKSNGP…RKALPNPGRA (64 aa). Basic and acidic residues predominate over residues 215–229; it reads TSHLPEQEGTDENRK. The disordered stretch occupies residues 215–237; that stretch reads TSHLPEQEGTDENRKALPNPGRA.

As to expression, ubiquitous with higher expression in immune tissue.

The protein localises to the membrane. This chain is Immunoglobulin superfamily member 6 (Igsf6), found in Mus musculus (Mouse).